Consider the following 99-residue polypeptide: Acylphosphatase (99 aa).

The Acylphosphatase-like domain maps to 5 to 97 (VRQVMIRGRV…RPGERFSQLP (93 aa)). Residues Arg-20 and Asn-38 contribute to the active site.

Belongs to the acylphosphatase family.

The enzyme catalyses an acyl phosphate + H2O = a carboxylate + phosphate + H(+). This is Acylphosphatase (acyP) from Nitrobacter winogradskyi (strain ATCC 25391 / DSM 10237 / CIP 104748 / NCIMB 11846 / Nb-255).